We begin with the raw amino-acid sequence, 394 residues long: S-adenosylmethionine synthase 2 (394 aa).

Glu-11 contributes to the Mg(2+) binding site. His-17 contacts ATP. Glu-45 serves as a coordination point for K(+). Glu-58 and Gln-101 together coordinate L-methionine. ATP contacts are provided by residues 169–171, 237–240, Asp-248, 254–255, Ala-271, Lys-275, and Lys-279; these read DGK, SGRF, and RK. Asp-248 is an L-methionine binding site. L-methionine is bound at residue Lys-279.

The protein belongs to the AdoMet synthase family. Homotetramer. Mn(2+) is required as a cofactor. The cofactor is Mg(2+). It depends on Co(2+) as a cofactor. Requires K(+) as cofactor.

The protein localises to the cytoplasm. The catalysed reaction is L-methionine + ATP + H2O = S-adenosyl-L-methionine + phosphate + diphosphate. It functions in the pathway amino-acid biosynthesis; S-adenosyl-L-methionine biosynthesis; S-adenosyl-L-methionine from L-methionine: step 1/1. In terms of biological role, catalyzes the formation of S-adenosylmethionine from methionine and ATP. The reaction comprises two steps that are both catalyzed by the same enzyme: formation of S-adenosylmethionine (AdoMet) and triphosphate, and subsequent hydrolysis of the triphosphate. The sequence is that of S-adenosylmethionine synthase 2 (SAM2) from Oryza sativa subsp. japonica (Rice).